The primary structure comprises 406 residues: GTPase Obg (406 aa).

Residues methionine 1–leucine 159 form the Obg domain. A disordered region spans residues glycine 120–threonine 143. Positions alanine 160–glutamate 333 constitute an OBG-type G domain. GTP-binding positions include glycine 166–serine 173, phenylalanine 191–valine 195, aspartate 213–glycine 216, asparagine 283–aspartate 286, and serine 314–leucine 316. The Mg(2+) site is built by serine 173 and threonine 193. Positions glutamate 381–aspartate 406 are disordered. The span at methionine 383 to valine 399 shows a compositional bias: acidic residues.

It belongs to the TRAFAC class OBG-HflX-like GTPase superfamily. OBG GTPase family. Monomer. It depends on Mg(2+) as a cofactor.

The protein resides in the cytoplasm. In terms of biological role, an essential GTPase which binds GTP, GDP and possibly (p)ppGpp with moderate affinity, with high nucleotide exchange rates and a fairly low GTP hydrolysis rate. Plays a role in control of the cell cycle, stress response, ribosome biogenesis and in those bacteria that undergo differentiation, in morphogenesis control. This chain is GTPase Obg, found in Acinetobacter baumannii (strain ACICU).